The following is a 464-amino-acid chain: Keratin, type I cytoskeletal 28 (464 aa).

Residues 1–85 (MSLRFSSGSR…GSEGGLFSGN (85 aa)) form a head region. The coil 1A stretch occupies residues 86 to 121 (EKVTMQNLNDRLASYLDNVRALEEANAELERKIKSW). Positions 86 to 401 (EKVTMQNLND…RLIDGDRNSC (316 aa)) constitute an IF rod domain. The interval 122-143 (YEKHGPGSCHGLDHDYSRYHLT) is linker 1. The segment at 144-235 (IEDLKNKIIS…KNHEEEVKAL (92 aa)) is coil 1B. The segment at 236-258 (QCVAGGNVNVEMNAAPGVDLTLL) is linker 12. Positions 259–397 (LNNMRAEYED…ETYCRLIDGD (139 aa)) are coil 2. Positions 398–464 (RNSCSKSKGF…NGKTKQRVPF (67 aa)) are tail. Low complexity predominate over residues 402–417 (SKSKGFGSGSPGNSSK). Disordered regions lie at residues 402–422 (SKSKGFGSGSPGNSSKDLSRT) and 440–464 (SSRVQSIEEKTSKMTNGKTKQRVPF).

It belongs to the intermediate filament family. In terms of assembly, heterotetramer of two type I and two type II keratins.

The protein resides in the cytoplasm. Functionally, essential for the proper assembly of types I and II keratin protein complexes and the formation of keratin intermediate filaments in the inner root sheath (irs). This chain is Keratin, type I cytoskeletal 28, found in Bos taurus (Bovine).